The sequence spans 367 residues: uncharacterized protein (367 aa).

Positions 1-96 constitute an FAD-binding PCMH-type domain; sequence ITLHRLAELV…LTATLQLQPV (96 aa).

This sequence to M.tuberculosis Rv3790.

This is an uncharacterized protein from Streptomyces coelicolor.